The primary structure comprises 279 residues: MFRNQYDSDVTVWSPQGRLHQVEYAMEAVKLGTATVGLKNKDYAVLVALCKPTSELSDTQRKIIPIDDHLGISIAGLTADARVLSRYLRSECLNYKHSYDTTYPVSRLITNLGNKMQTTTQRYDRRPYGVGLLVAGYDERGPHIYQVTPSATFFNCKANSIGSRSQSARTYLEKNLNKFLDSSKDEIIRHGIRAILGTLPTDEQGKDAGQYDITVAIVGKDQPFTILSNKDSAKHVAIAKENDNDTPRNDDDDDRPSPPEEPAAGPRDPEVLVATEQRP.

Tyr-103 is subject to Phosphotyrosine. The span at His-235 to Asn-249 shows a compositional bias: basic and acidic residues. The segment at His-235–Pro-279 is disordered.

The protein belongs to the peptidase T1A family. As to quaternary structure, the 26S proteasome consists of a 20S proteasome core and two 19S regulatory subunits. The 20S proteasome core is composed of 28 subunits that are arranged in four stacked rings, resulting in a barrel-shaped structure. The two end rings are each formed by seven alpha subunits, and the two central rings are each formed by seven beta subunits. The catalytic chamber with the active sites is on the inside of the barrel. Interacts with PI31.

The protein localises to the cytoplasm. Its subcellular location is the nucleus. In terms of biological role, the proteasome is a multicatalytic proteinase complex which is characterized by its ability to cleave peptides with Arg, Phe, Tyr, Leu, and Glu adjacent to the leaving group at neutral or slightly basic pH. The proteasome has an ATP-dependent proteolytic activity. The chain is Proteasome subunit alpha type-1 (Prosalpha6) from Drosophila melanogaster (Fruit fly).